The sequence spans 146 residues: Cyanate hydratase (146 aa).

Residues R87, E90, and S113 contribute to the active site.

The protein belongs to the cyanase family.

It carries out the reaction cyanate + hydrogencarbonate + 3 H(+) = NH4(+) + 2 CO2. Functionally, catalyzes the reaction of cyanate with bicarbonate to produce ammonia and carbon dioxide. The protein is Cyanate hydratase of Pseudomonas putida (strain ATCC 700007 / DSM 6899 / JCM 31910 / BCRC 17059 / LMG 24140 / F1).